Reading from the N-terminus, the 212-residue chain is MAKITKLEVQKRNKERVNVFLDEDYAFSISAELIYKEGIKVKDSVNSEKLKVLANKDAIIKCREAAIKTIERNLKTEKQVRDKLNLKGYDEDSITKAIDFLKEYNFLDDKDYANKFVKDKLKCQGSNKIRYSLMQKGVSKDVIEEELSSIDKENEKESALILAQKKLNSLRKTEDDTYKISNKLYRFLLSKGYGYDIIKDVVKEAINFELYD.

Belongs to the RecX family.

It localises to the cytoplasm. Functionally, modulates RecA activity. The chain is Regulatory protein RecX from Clostridium botulinum (strain Eklund 17B / Type B).